The following is a 358-amino-acid chain: Putative zinc metalloprotease RC0203 (358 aa).

A Zn(2+)-binding site is contributed by His18. The active site involves Glu19. His22 provides a ligand contact to Zn(2+). 4 helical membrane-spanning segments follow: residues 52 to 71, 97 to 119, 285 to 307, and 332 to 351; these read GVRWKICLIPLGGYVKIYGY, FLIVAAGPLINYLLAIIIFAGFY, YLLFIAMLSVNLGLLNLLPIPVL, and ILLQLGAIIIIFLIIIAVSN. Residues 102 to 186 form the PDZ domain; it reads AGPLINYLLA…STLTIERKSE (85 aa).

The protein belongs to the peptidase M50B family. The cofactor is Zn(2+).

The protein localises to the cell inner membrane. The sequence is that of Putative zinc metalloprotease RC0203 from Rickettsia conorii (strain ATCC VR-613 / Malish 7).